The chain runs to 99 residues: MLLMNLQLFAHKKGVGSSKNGRDSESKRLGTKCGDGQFVLAGNILVRQRGTKIHPGVNVGRGGDDTLYAKVDGIVKYERVGRSKKQASVYPVEIENVAE.

Positions 1 to 9 (MLLMNLQLF) are excised as a propeptide.

The protein belongs to the bacterial ribosomal protein bL27 family. In terms of processing, the N-terminus is cleaved by ribosomal processing cysteine protease Prp.

The protein is Large ribosomal subunit protein bL27 of Clostridium novyi (strain NT).